The following is a 74-amino-acid chain: Auswaprin-a (74 aa).

An N-terminal signal peptide occupies residues 1 to 24 (MSSGGLLLLLGLLTLWGVLTPVSS). The region spanning 27-71 (RPKKPGLCPPRPQKPCVKECKNDWSCSGQQKCCNYGCIDECRDPI) is the WAP domain. Disulfide bonds link Cys34–Cys59, Cys42–Cys63, Cys46–Cys58, and Cys52–Cys67.

Belongs to the venom waprin family. In terms of tissue distribution, expressed by the venom gland.

It localises to the secreted. Its function is as follows. Damages membranes of susceptible bacteria. Has no hemolytic activity. Not toxic to mice. Does not inhibit the proteinases elastase and cathepsin G. The protein is Auswaprin-a of Pseudechis australis (Mulga snake).